We begin with the raw amino-acid sequence, 132 residues long: Nickel-responsive regulator (132 aa).

Ni(2+) contacts are provided by histidine 76, histidine 87, histidine 89, and cysteine 95.

The protein belongs to the transcriptional regulatory CopG/NikR family. As to quaternary structure, homotetramer. Requires Ni(2+) as cofactor.

Transcriptional repressor of the nikABCDE operon. Is active in the presence of excessive concentrations of intracellular nickel. The chain is Nickel-responsive regulator from Klebsiella pneumoniae (strain 342).